Here is a 299-residue protein sequence, read N- to C-terminus: Ribonuclease H2 subunit A (299 aa).

Met-1 is modified (N-acetylmethionine). An RNase H type-2 domain is found at 28–250 (PCVLGVDEAG…AQTILEKEAE (223 aa)). 3 residues coordinate a divalent metal cation: Asp-34, Glu-35, and Asp-141. A phosphothreonine mark is found at Thr-204 and Thr-216. A phosphoserine mark is found at Ser-257 and Ser-277.

This sequence belongs to the RNase HII family. Eukaryotic subfamily. As to quaternary structure, the RNase H2 complex is a heterotrimer composed of the catalytic subunit RNASEH2A and the non-catalytic subunits RNASEH2B and RNASEH2C. Mn(2+) serves as cofactor. It depends on Mg(2+) as a cofactor.

Its subcellular location is the nucleus. It catalyses the reaction Endonucleolytic cleavage to 5'-phosphomonoester.. Its function is as follows. Catalytic subunit of RNase HII, an endonuclease that specifically degrades the RNA of RNA:DNA hybrids. Participates in DNA replication, possibly by mediating the removal of lagging-strand Okazaki fragment RNA primers during DNA replication. Mediates the excision of single ribonucleotides from DNA:RNA duplexes. This chain is Ribonuclease H2 subunit A (RNASEH2A), found in Homo sapiens (Human).